Reading from the N-terminus, the 296-residue chain is Isoprenyl transferase (296 aa).

Residues 1-11 (MATERNRRRKG) are compositionally biased toward basic residues. Residues 1-29 (MATERNRRRKGSYPQLPPAPDDYPTFPDK) form a disordered region. D76 is an active-site residue. D76 serves as a coordination point for Mg(2+). Residues 77–80 (GNGR), W81, R89, H93, and 121–123 (STE) contribute to the substrate site. N124 acts as the Proton acceptor in catalysis. Substrate is bound by residues W125, R127, R244, and 250–252 (RAS). A Mg(2+)-binding site is contributed by E263.

It belongs to the UPP synthase family. As to quaternary structure, homodimer. The cofactor is Mg(2+).

Functionally, catalyzes the condensation of isopentenyl diphosphate (IPP) with allylic pyrophosphates generating different type of terpenoids. The sequence is that of Isoprenyl transferase from Mycolicibacterium parafortuitum (Mycobacterium parafortuitum).